The sequence spans 671 residues: DNA ligase (671 aa).

NAD(+)-binding positions include 32-36, 81-82, and Glu-113; these read DAEYD and SL. The N6-AMP-lysine intermediate role is filled by Lys-115. The NAD(+) site is built by Arg-136, Glu-173, Lys-290, and Lys-314. Residues Cys-408, Cys-411, Cys-426, and Cys-432 each contribute to the Zn(2+) site. A BRCT domain is found at 593 to 671; the sequence is EIDSPFAGKT…EAEMLRLLGS (79 aa).

It belongs to the NAD-dependent DNA ligase family. LigA subfamily. It depends on Mg(2+) as a cofactor. Mn(2+) serves as cofactor.

It carries out the reaction NAD(+) + (deoxyribonucleotide)n-3'-hydroxyl + 5'-phospho-(deoxyribonucleotide)m = (deoxyribonucleotide)n+m + AMP + beta-nicotinamide D-nucleotide.. Its function is as follows. DNA ligase that catalyzes the formation of phosphodiester linkages between 5'-phosphoryl and 3'-hydroxyl groups in double-stranded DNA using NAD as a coenzyme and as the energy source for the reaction. It is essential for DNA replication and repair of damaged DNA. The chain is DNA ligase from Escherichia coli O157:H7.